Reading from the N-terminus, the 455-residue chain is Lysine histidine transporter-like 4 (455 aa).

Residues 1–38 (MAGIPDHIQDQHLVEEDQPFDLEDWLPITASRNANWYY) are Cytoplasmic-facing. A helical transmembrane segment spans residues 39 to 59 (SAFHNVTAIVGAGVLGLPYAM). Residues 60–61 (SE) lie on the Extracellular side of the membrane. The chain crosses the membrane as a helical span at residues 62–82 (LGWGPGVVVLILSWVITLYTL). Over 83–113 (WQMIEMHEMFEGQRFDRYHELGQAAFGKKLG) the chain is Cytoplasmic. Residues 114-134 (LYIIVPLQLLVEISVCIVYMV) traverse the membrane as a helical segment. Residues 135-158 (TGGKSLKNVHDLALGDGDKCTKLR) lie on the Extracellular side of the membrane. A helical membrane pass occupies residues 159–179 (IQHFILIFASSQFVLSLLKNF). Over 180–181 (NS) the chain is Cytoplasmic. The chain crosses the membrane as a helical span at residues 182–202 (ISGVSLVAAVMSVSYSTIAWV). Residues 203–226 (ASLRKGATTGSVEYGYRKRTTSVP) are Extracellular-facing. The chain crosses the membrane as a helical span at residues 227-247 (LAFLSALGEMAFAYAGHNVVL). Residues 248 to 267 (EIQATIPSTPENPSKRPMWK) lie on the Cytoplasmic side of the membrane. A helical transmembrane segment spans residues 268–288 (GAVVAYIIVAFCYFPVALVGF). Topologically, residues 289-307 (KTFGNSVEESILESLTKPT) are extracellular. A helical transmembrane segment spans residues 308 to 328 (ALVIVANMFVVIHLLGSYQVY). The Cytoplasmic segment spans residues 329–357 (AMPVFDMIESVMIRIWHFSPTRVLRFTIR). The chain crosses the membrane as a helical span at residues 358-378 (WTFVAATMGIAVGLPYYSALL). A topological domain (extracellular) is located at residue Ser379. Residues 380–400 (FFGGFVFAPTTYFIPCIMWLI) form a helical membrane-spanning segment. The Cytoplasmic segment spans residues 401-412 (LKKPKRFSLSWC). The chain crosses the membrane as a helical span at residues 413–433 (MNWFCIIFGLVLMIIAPIGGL). Over 434 to 455 (AKLIYNIQKGTLPNSRCNLPKH) the chain is Extracellular.

It belongs to the amino acid/polyamine transporter 2 family. Amino acid/auxin permease (AAAP) (TC 2.A.18.2) subfamily.

The protein resides in the cell membrane. Amino acid transporter. This chain is Lysine histidine transporter-like 4, found in Arabidopsis thaliana (Mouse-ear cress).